The primary structure comprises 525 residues: 2,3-bisphosphoglycerate-independent phosphoglycerate mutase 2 (525 aa).

Residues D14 and S64 each contribute to the Mn(2+) site. S64 functions as the Phosphoserine intermediate in the catalytic mechanism. Substrate is bound by residues H125, 155 to 156, R187, R193, 274 to 277, and K347; these read RD and RADR. Mn(2+) is bound by residues D414, H418, D455, H456, and H474.

The protein belongs to the BPG-independent phosphoglycerate mutase family. It depends on Mn(2+) as a cofactor.

It catalyses the reaction (2R)-2-phosphoglycerate = (2R)-3-phosphoglycerate. Its pathway is carbohydrate degradation; glycolysis; pyruvate from D-glyceraldehyde 3-phosphate: step 3/5. Its function is as follows. Catalyzes the interconversion of 2-phosphoglycerate and 3-phosphoglycerate. In Methanosarcina barkeri (strain Fusaro / DSM 804), this protein is 2,3-bisphosphoglycerate-independent phosphoglycerate mutase 2.